The following is a 275-amino-acid chain: MQAVQQEIAQALKVQPPFEGAAALEQEVARRVAFIKGCLNNARLKTLVLGISGGVDSLTAALLAQRAINELRSETGDAGYRFIAVRLPYQVQHDEHDAQACLEVIKADEVHTVDIAPAVRALAAETEALKGGSPSLVDFVVGNIKARTRMVAQYTIAGARAGLVIGTDHAAEAVMGFFTKFGDGACDLAPLSGLVKNQVRAIARSFGAPESLVEKVPTADLEDLEPGKPDEASHGVTYQQIDAFLHGQPVSQEAFDIIVATYRKTQHKRELPFAP.

50-57 is a binding site for ATP; that stretch reads GISGGVDS. Residue Asp-56 coordinates Mg(2+). Arg-147 provides a ligand contact to deamido-NAD(+). Thr-167 contributes to the ATP binding site. Glu-172 contributes to the Mg(2+) binding site. Deamido-NAD(+) contacts are provided by Lys-180 and Asp-187. Residues Lys-196 and Thr-218 each coordinate ATP. 267 to 268 contributes to the deamido-NAD(+) binding site; sequence HK.

It belongs to the NAD synthetase family. As to quaternary structure, homodimer.

The catalysed reaction is deamido-NAD(+) + NH4(+) + ATP = AMP + diphosphate + NAD(+) + H(+). The protein operates within cofactor biosynthesis; NAD(+) biosynthesis; NAD(+) from deamido-NAD(+) (ammonia route): step 1/1. Its function is as follows. Catalyzes the ATP-dependent amidation of deamido-NAD to form NAD. Uses ammonia as a nitrogen source. In Pseudomonas entomophila (strain L48), this protein is NH(3)-dependent NAD(+) synthetase.